Consider the following 374-residue polypeptide: Chaperone protein DnaJ (374 aa).

Residues 5–70 form the J domain; the sequence is DYYEVLGVER…SKRAAFDQYG (66 aa). The segment at 133–211 adopts a CR-type zinc-finger fold; the sequence is GTTVSIRVPT…CHGEGRVEEY (79 aa). Cys-146, Cys-149, Cys-163, Cys-166, Cys-185, Cys-188, Cys-199, and Cys-202 together coordinate Zn(2+). CXXCXGXG motif repeat units lie at residues 146 to 153, 163 to 170, 185 to 192, and 199 to 206; these read CQPCDGSG, CPTCGGIG, CPRCHGQG, and CTSCHGEG.

It belongs to the DnaJ family. Homodimer. Requires Zn(2+) as cofactor.

It localises to the cytoplasm. Functionally, participates actively in the response to hyperosmotic and heat shock by preventing the aggregation of stress-denatured proteins and by disaggregating proteins, also in an autonomous, DnaK-independent fashion. Unfolded proteins bind initially to DnaJ; upon interaction with the DnaJ-bound protein, DnaK hydrolyzes its bound ATP, resulting in the formation of a stable complex. GrpE releases ADP from DnaK; ATP binding to DnaK triggers the release of the substrate protein, thus completing the reaction cycle. Several rounds of ATP-dependent interactions between DnaJ, DnaK and GrpE are required for fully efficient folding. Also involved, together with DnaK and GrpE, in the DNA replication of plasmids through activation of initiation proteins. This chain is Chaperone protein DnaJ, found in Pseudomonas putida (strain GB-1).